A 179-amino-acid chain; its full sequence is MSSRVLTPDVVGIDALVQDHQTVLAKAEGGVVAVFANNAPAFYAVTPARLAELLALEEKLARPGSDVALDDQLYQEPQAAPVAVPMGKFAMYPDWQPDADFIRLAALWGVALREPVTTEELASFIAYWQAEGKVFHHVQWQQKLARSLQIGRASNGGLPKRDVNTVSEPDSQIPPGFRG.

Residues 156 to 179 (GGLPKRDVNTVSEPDSQIPPGFRG) are disordered.

It belongs to the DnaT family. Homooligomerizes. Interacts with PriB. Component of the replication restart primosome. Primosome assembly occurs via a 'hand-off' mechanism. PriA binds to replication forks, subsequently PriB then DnaT bind; DnaT then displaces ssDNA to generate the helicase loading substrate.

Its function is as follows. Involved in the restart of stalled replication forks, which reloads the replicative helicase on sites other than the origin of replication. Can function in multiple replication restart pathways. Displaces ssDNA from a PriB-ssDNA complex. Probably forms a spiral filament on ssDNA. This chain is Replication restart protein DnaT, found in Escherichia coli (strain ATCC 8739 / DSM 1576 / NBRC 3972 / NCIMB 8545 / WDCM 00012 / Crooks).